The chain runs to 273 residues: Anthocyanin regulatory C1 protein (273 aa).

HTH myb-type domains follow at residues 9-65 (KEGV…RPNI) and 66-116 (RRGN…GRRA). 2 DNA-binding regions (H-T-H motif) span residues 37-61 (WREV…LNYL) and 89-112 (WSLI…NSTL). 2 disordered regions span residues 137–164 (ATPA…SAGT) and 196–220 (AGET…SDDC). The span at 204-214 (AGGGGGGGGEA) shows a compositional bias: gly residues.

Its subcellular location is the nucleus. In terms of biological role, controls the expression of genes involved in anthocyanin biosynthesis. Regulates the expression of at least 3 structural genes: chalcone synthase, dihydroflavonol reductase and flavonol O(3) glucosyltransferase. C1 acts as a trans-acting factor. The protein is Anthocyanin regulatory C1 protein (C1) of Zea mays (Maize).